A 128-amino-acid chain; its full sequence is Large ribosomal subunit protein bL17 (128 aa).

The protein belongs to the bacterial ribosomal protein bL17 family. In terms of assembly, part of the 50S ribosomal subunit. Contacts protein L32.

In Streptococcus mutans serotype c (strain ATCC 700610 / UA159), this protein is Large ribosomal subunit protein bL17.